A 95-amino-acid polypeptide reads, in one-letter code: Integration host factor subunit beta (95 aa).

The interval 57–76 (APRTGRNPKTGDKVDLEGKY) is disordered. Positions 65–76 (KTGDKVDLEGKY) are enriched in basic and acidic residues.

Belongs to the bacterial histone-like protein family. As to quaternary structure, heterodimer of an alpha and a beta chain.

Functionally, this protein is one of the two subunits of integration host factor, a specific DNA-binding protein that functions in genetic recombination as well as in transcriptional and translational control. This is Integration host factor subunit beta from Enterobacter sp. (strain 638).